We begin with the raw amino-acid sequence, 309 residues long: Protein-L-isoaspartate O-methyltransferase (309 aa).

A disordered region spans residues 1 to 46 (MSGERAKRFPLALEDLKRAPRKSDGRAGERHAAIAAPKAADKPAAV). Residues 14 to 32 (EDLKRAPRKSDGRAGERHA) show a composition bias toward basic and acidic residues. Residues 33–46 (AIAAPKAADKPAAV) are compositionally biased toward low complexity. The active site involves S156.

Belongs to the methyltransferase superfamily. L-isoaspartyl/D-aspartyl protein methyltransferase family.

The protein resides in the cytoplasm. It carries out the reaction [protein]-L-isoaspartate + S-adenosyl-L-methionine = [protein]-L-isoaspartate alpha-methyl ester + S-adenosyl-L-homocysteine. In terms of biological role, catalyzes the methyl esterification of L-isoaspartyl residues in peptides and proteins that result from spontaneous decomposition of normal L-aspartyl and L-asparaginyl residues. It plays a role in the repair and/or degradation of damaged proteins. This is Protein-L-isoaspartate O-methyltransferase from Burkholderia vietnamiensis (strain G4 / LMG 22486) (Burkholderia cepacia (strain R1808)).